A 544-amino-acid polypeptide reads, in one-letter code: Protein angel homolog 2 (544 aa).

The protein belongs to the CCR4/nocturin family.

This chain is Protein angel homolog 2 (Angel2), found in Mus musculus (Mouse).